A 403-amino-acid polypeptide reads, in one-letter code: RILP-like protein 1 (403 aa).

Serine 7 bears the Phosphoserine mark. In terms of domain architecture, RH1 spans 10 to 97 (AAESALEKNV…RLERMDRIEK (88 aa)). An S-nitrosocysteine modification is found at cysteine 47. Positions 76-265 (ELDELRLELD…GELNQNGEEE (190 aa)) form a coiled coil. The 66-residue stretch at 291-356 (RPRFTLQELR…PQPESGIKRL (66 aa)) folds into the RH2 domain. Residues 329–348 (EEENQIPQPPPIAHPRMSPQ) are disordered.

It belongs to the RILPL family. As to quaternary structure, interacts (when S-nitrosylated) with GAPDH. Interacts with RAB8A; interaction is dependent on the phosphorylation of 'Thr-72' of RAB8A. Interacts with RAB10 and RAB12; the interaction is dependent on the phosphorylation of 'Thr-73' of RAB10, and 'Ser-105' of RAB12. S-nitrosylation is required for the interaction with GAPDH.

It is found in the cytoplasm. It localises to the cytosol. Its subcellular location is the cytoskeleton. The protein localises to the microtubule organizing center. The protein resides in the centrosome. It is found in the centriole. It localises to the cilium basal body. In terms of biological role, plays a role in the regulation of cell shape and polarity. Plays a role in cellular protein transport, including protein transport away from primary cilia. Neuroprotective protein, which acts by sequestring GAPDH in the cytosol and prevent the apoptotic function of GAPDH in the nucleus. Competes with SIAH1 for binding GAPDH. Does not regulate lysosomal morphology and distribution. Binds to RAB10 following LRRK2-mediated RAB10 phosphorylation which leads to inhibition of ciliogenesis. This Bos taurus (Bovine) protein is RILP-like protein 1 (RILPL1).